The primary structure comprises 156 residues: 3-hydroxyacyl-[acyl-carrier-protein] dehydratase FabZ (156 aa).

His61 is a catalytic residue.

It belongs to the thioester dehydratase family. FabZ subfamily.

Its subcellular location is the cytoplasm. It carries out the reaction a (3R)-hydroxyacyl-[ACP] = a (2E)-enoyl-[ACP] + H2O. Functionally, involved in unsaturated fatty acids biosynthesis. Catalyzes the dehydration of short chain beta-hydroxyacyl-ACPs and long chain saturated and unsaturated beta-hydroxyacyl-ACPs. The polypeptide is 3-hydroxyacyl-[acyl-carrier-protein] dehydratase FabZ (Acaryochloris marina (strain MBIC 11017)).